The chain runs to 305 residues: N-acetylneuraminate lyase 2 (305 aa).

Aceneuramate-binding residues include S47 and T48. Catalysis depends on Y137, which acts as the Proton donor. K165 serves as the catalytic Schiff-base intermediate with substrate. 5 residues coordinate aceneuramate: T167, G189, D191, E192, and S208.

The protein belongs to the DapA family. NanA subfamily. Homotetramer.

The protein resides in the cytoplasm. It catalyses the reaction aceneuramate = aldehydo-N-acetyl-D-mannosamine + pyruvate. It functions in the pathway amino-sugar metabolism; N-acetylneuraminate degradation; D-fructose 6-phosphate from N-acetylneuraminate: step 1/5. Its function is as follows. Catalyzes the reversible aldol cleavage of N-acetylneuraminic acid (sialic acid; Neu5Ac) to form pyruvate and N-acetylmannosamine (ManNAc) via a Schiff base intermediate. In Escherichia coli O6:H1 (strain CFT073 / ATCC 700928 / UPEC), this protein is N-acetylneuraminate lyase 2.